The primary structure comprises 206 residues: Large ribosomal subunit protein uL4 (206 aa).

Residues Met63–Arg94 form a disordered region. Residues Tyr64–Ala77 are compositionally biased toward basic residues.

This sequence belongs to the universal ribosomal protein uL4 family. Part of the 50S ribosomal subunit.

Its function is as follows. One of the primary rRNA binding proteins, this protein initially binds near the 5'-end of the 23S rRNA. It is important during the early stages of 50S assembly. It makes multiple contacts with different domains of the 23S rRNA in the assembled 50S subunit and ribosome. Forms part of the polypeptide exit tunnel. In Mesorhizobium japonicum (strain LMG 29417 / CECT 9101 / MAFF 303099) (Mesorhizobium loti (strain MAFF 303099)), this protein is Large ribosomal subunit protein uL4.